Reading from the N-terminus, the 616-residue chain is Dihydroxy-acid dehydratase (616 aa).

Aspartate 81 lines the Mg(2+) pocket. Residue cysteine 122 coordinates [2Fe-2S] cluster. Residues aspartate 123 and lysine 124 each coordinate Mg(2+). Lysine 124 carries the N6-carboxylysine modification. Cysteine 195 is a binding site for [2Fe-2S] cluster. Glutamate 491 is a binding site for Mg(2+). Serine 517 functions as the Proton acceptor in the catalytic mechanism.

It belongs to the IlvD/Edd family. Homodimer. Requires [2Fe-2S] cluster as cofactor. Mg(2+) is required as a cofactor.

The catalysed reaction is (2R)-2,3-dihydroxy-3-methylbutanoate = 3-methyl-2-oxobutanoate + H2O. The enzyme catalyses (2R,3R)-2,3-dihydroxy-3-methylpentanoate = (S)-3-methyl-2-oxopentanoate + H2O. Its pathway is amino-acid biosynthesis; L-isoleucine biosynthesis; L-isoleucine from 2-oxobutanoate: step 3/4. It participates in amino-acid biosynthesis; L-valine biosynthesis; L-valine from pyruvate: step 3/4. Functionally, functions in the biosynthesis of branched-chain amino acids. Catalyzes the dehydration of (2R,3R)-2,3-dihydroxy-3-methylpentanoate (2,3-dihydroxy-3-methylvalerate) into 2-oxo-3-methylpentanoate (2-oxo-3-methylvalerate) and of (2R)-2,3-dihydroxy-3-methylbutanoate (2,3-dihydroxyisovalerate) into 2-oxo-3-methylbutanoate (2-oxoisovalerate), the penultimate precursor to L-isoleucine and L-valine, respectively. The sequence is that of Dihydroxy-acid dehydratase from Yersinia enterocolitica serotype O:8 / biotype 1B (strain NCTC 13174 / 8081).